A 368-amino-acid polypeptide reads, in one-letter code: tRNA-specific 2-thiouridylase MnmA (368 aa).

Residues 10-17 (AMSGGVDS) and M36 contribute to the ATP site. The active-site Nucleophile is the C108. A disulfide bridge links C108 with C206. G132 serves as a coordination point for ATP. The interaction with tRNA stretch occupies residues 156 to 158 (KDQ). C206 serves as the catalytic Cysteine persulfide intermediate. The interval 312 to 313 (RY) is interaction with tRNA.

The protein belongs to the MnmA/TRMU family.

The protein resides in the cytoplasm. It catalyses the reaction S-sulfanyl-L-cysteinyl-[protein] + uridine(34) in tRNA + AH2 + ATP = 2-thiouridine(34) in tRNA + L-cysteinyl-[protein] + A + AMP + diphosphate + H(+). Catalyzes the 2-thiolation of uridine at the wobble position (U34) of tRNA, leading to the formation of s(2)U34. In Natranaerobius thermophilus (strain ATCC BAA-1301 / DSM 18059 / JW/NM-WN-LF), this protein is tRNA-specific 2-thiouridylase MnmA.